We begin with the raw amino-acid sequence, 63 residues long: Cecropin (63 aa).

The first 23 residues, 1–23 (MNFYKIFVFIALILALSVSQSEA), serve as a signal peptide directing secretion. Arginine 62 is subject to Arginine amide.

Monomer. As to expression, hemolymph.

It localises to the secreted. Its function is as follows. Cecropins have lytic and antibacterial activity against several Gram-negative bacteria. This Glossina morsitans morsitans (Savannah tsetse fly) protein is Cecropin.